The chain runs to 97 residues: MKRICSIYRSPKRNEMYLYVLKSDVLKRVPPELLVAFGKPVHAFDLVLSPERALSREDINVVLENLDSQGYHLQMPPAEDDYIEHLPEELLRRNDPM.

The YcgL domain maps to 3-87; that stretch reads RICSIYRSPK…AEDDYIEHLP (85 aa).

This Pseudomonas savastanoi pv. phaseolicola (strain 1448A / Race 6) (Pseudomonas syringae pv. phaseolicola (strain 1448A / Race 6)) protein is YcgL domain-containing protein PSPPH_1548.